The following is a 76-amino-acid chain: Protein OPG128 (76 aa).

C17 and C21 are oxidised to a cystine.

It belongs to the orthopoxvirus OPG128 family. As to quaternary structure, interacts with sulfhydryl oxidase OPG072; this interaction involves formation of a transient disulfide-bonded intermediate, allowing disulfide bond transfer. Interacts with OPG088; this interaction involves formation of a transient disulfide-bonded intermediate, allowing disulfide bond transfer.

Its function is as follows. Late protein which probably participates in disulfide bond formation by functioning as a thiol-disulfide transfer protein between membrane-associated OPG072 and OPG08. The complete pathway for formation of disulfide bonds in intracellular virion membrane proteins sequentially involves oxidation of OPG072, OPG128 and OPG08. The chain is Protein OPG128 (OPG128) from Variola virus (isolate Human/India/Ind3/1967) (VARV).